The following is a 371-amino-acid chain: Aminomethyltransferase (371 aa).

It belongs to the GcvT family. The glycine cleavage system is composed of four proteins: P, T, L and H.

It catalyses the reaction N(6)-[(R)-S(8)-aminomethyldihydrolipoyl]-L-lysyl-[protein] + (6S)-5,6,7,8-tetrahydrofolate = N(6)-[(R)-dihydrolipoyl]-L-lysyl-[protein] + (6R)-5,10-methylene-5,6,7,8-tetrahydrofolate + NH4(+). The glycine cleavage system catalyzes the degradation of glycine. The chain is Aminomethyltransferase from Leptospira borgpetersenii serovar Hardjo-bovis (strain JB197).